Consider the following 481-residue polypeptide: UDP-N-acetylmuramate--L-alanine ligase (481 aa).

Residue 126-132 (GTHGKTT) participates in ATP binding.

It belongs to the MurCDEF family.

The protein localises to the cytoplasm. The catalysed reaction is UDP-N-acetyl-alpha-D-muramate + L-alanine + ATP = UDP-N-acetyl-alpha-D-muramoyl-L-alanine + ADP + phosphate + H(+). It functions in the pathway cell wall biogenesis; peptidoglycan biosynthesis. Cell wall formation. In Marinobacter nauticus (strain ATCC 700491 / DSM 11845 / VT8) (Marinobacter aquaeolei), this protein is UDP-N-acetylmuramate--L-alanine ligase.